An 873-amino-acid polypeptide reads, in one-letter code: Valine--tRNA ligase (873 aa).

The short motif at 46 to 56 is the 'HIGH' region element; that stretch reads PNVTGKLHIGH. The short motif at 525 to 529 is the 'KMSKS' region element; the sequence is KMSKS. Lys-528 is an ATP binding site. Residues 804–873 are a coiled coil; sequence NDDFIDKEKM…ELIQDKLNKM (70 aa).

It belongs to the class-I aminoacyl-tRNA synthetase family. ValS type 1 subfamily. Monomer.

Its subcellular location is the cytoplasm. The enzyme catalyses tRNA(Val) + L-valine + ATP = L-valyl-tRNA(Val) + AMP + diphosphate. Functionally, catalyzes the attachment of valine to tRNA(Val). As ValRS can inadvertently accommodate and process structurally similar amino acids such as threonine, to avoid such errors, it has a 'posttransfer' editing activity that hydrolyzes mischarged Thr-tRNA(Val) in a tRNA-dependent manner. This Mesoplasma florum (strain ATCC 33453 / NBRC 100688 / NCTC 11704 / L1) (Acholeplasma florum) protein is Valine--tRNA ligase.